The sequence spans 103 residues: Ig lambda chain C region (103 aa).

The Ig-like domain occupies 6-99 (PTITLFPPSK…NGTSITKTLK (94 aa)). A disulfide bridge links Cys-28 with Cys-85.

This chain is Ig lambda chain C region, found in Gallus gallus (Chicken).